Here is a 476-residue protein sequence, read N- to C-terminus: Bifunctional protein HldE (476 aa).

Residues Met-1–Thr-318 are ribokinase. Asn-195–Glu-198 serves as a coordination point for ATP. Residue Asp-264 is part of the active site. The interval Met-344–Gly-476 is cytidylyltransferase.

In the N-terminal section; belongs to the carbohydrate kinase PfkB family. This sequence in the C-terminal section; belongs to the cytidylyltransferase family. In terms of assembly, homodimer.

It carries out the reaction D-glycero-beta-D-manno-heptose 7-phosphate + ATP = D-glycero-beta-D-manno-heptose 1,7-bisphosphate + ADP + H(+). The catalysed reaction is D-glycero-beta-D-manno-heptose 1-phosphate + ATP + H(+) = ADP-D-glycero-beta-D-manno-heptose + diphosphate. It participates in nucleotide-sugar biosynthesis; ADP-L-glycero-beta-D-manno-heptose biosynthesis; ADP-L-glycero-beta-D-manno-heptose from D-glycero-beta-D-manno-heptose 7-phosphate: step 1/4. It functions in the pathway nucleotide-sugar biosynthesis; ADP-L-glycero-beta-D-manno-heptose biosynthesis; ADP-L-glycero-beta-D-manno-heptose from D-glycero-beta-D-manno-heptose 7-phosphate: step 3/4. Its function is as follows. Catalyzes the phosphorylation of D-glycero-D-manno-heptose 7-phosphate at the C-1 position to selectively form D-glycero-beta-D-manno-heptose-1,7-bisphosphate. Functionally, catalyzes the ADP transfer from ATP to D-glycero-beta-D-manno-heptose 1-phosphate, yielding ADP-D-glycero-beta-D-manno-heptose. This chain is Bifunctional protein HldE, found in Vibrio atlanticus (strain LGP32) (Vibrio splendidus (strain Mel32)).